Consider the following 343-residue polypeptide: Tribbles homolog 2 (343 aa).

The disordered stretch occupies residues 25-50; sequence EELSSIRSAEPSQSFSPNLGSPSPPE. Residues 29–45 are compositionally biased toward polar residues; the sequence is SIRSAEPSQSFSPNLGS. In terms of domain architecture, Protein kinase spans 61–308; it reads IGKYLLLEPL…SQEILDHPWF (248 aa).

This sequence belongs to the protein kinase superfamily. CAMK Ser/Thr protein kinase family. Tribbles subfamily. In terms of tissue distribution, expressed in granulosa cells of the dominant follicles of the ovary and down-regulated in ovulatory follicles.

It localises to the cytoplasm. The protein localises to the cytoskeleton. Interacts with MAPK kinases and regulates activation of MAP kinases. Does not display kinase activity. The polypeptide is Tribbles homolog 2 (Bos taurus (Bovine)).